The primary structure comprises 380 residues: F-box protein At4g18380 (380 aa).

The F-box domain maps to 22–70 (IDHFDNLPDSILLLIFNNIGDVKALGRCSVVSKRFHSLIPQVENVFVRV).

This Arabidopsis thaliana (Mouse-ear cress) protein is F-box protein At4g18380.